The following is a 339-amino-acid chain: Ketol-acid reductoisomerase (NADP(+)) (339 aa).

In terms of domain architecture, KARI N-terminal Rossmann spans 1 to 182 (MRVYYDRDAD…GGGRSGVIET (182 aa)). Residues 24-27 (YGSQ), arginine 48, serine 51, threonine 53, and 83-86 (DELQ) each bind NADP(+). The active site involves histidine 108. Glycine 134 lines the NADP(+) pocket. Residues 183-328 (TFKEECETDL…EKLRGMMPWI (146 aa)) enclose the KARI C-terminal knotted domain. Mg(2+) contacts are provided by aspartate 191, glutamate 195, glutamate 227, and glutamate 231. Residue serine 252 coordinates substrate.

This sequence belongs to the ketol-acid reductoisomerase family. It depends on Mg(2+) as a cofactor.

It carries out the reaction (2R)-2,3-dihydroxy-3-methylbutanoate + NADP(+) = (2S)-2-acetolactate + NADPH + H(+). The enzyme catalyses (2R,3R)-2,3-dihydroxy-3-methylpentanoate + NADP(+) = (S)-2-ethyl-2-hydroxy-3-oxobutanoate + NADPH + H(+). It participates in amino-acid biosynthesis; L-isoleucine biosynthesis; L-isoleucine from 2-oxobutanoate: step 2/4. The protein operates within amino-acid biosynthesis; L-valine biosynthesis; L-valine from pyruvate: step 2/4. Its function is as follows. Involved in the biosynthesis of branched-chain amino acids (BCAA). Catalyzes an alkyl-migration followed by a ketol-acid reduction of (S)-2-acetolactate (S2AL) to yield (R)-2,3-dihydroxy-isovalerate. In the isomerase reaction, S2AL is rearranged via a Mg-dependent methyl migration to produce 3-hydroxy-3-methyl-2-ketobutyrate (HMKB). In the reductase reaction, this 2-ketoacid undergoes a metal-dependent reduction by NADPH to yield (R)-2,3-dihydroxy-isovalerate. In Brucella anthropi (strain ATCC 49188 / DSM 6882 / CCUG 24695 / JCM 21032 / LMG 3331 / NBRC 15819 / NCTC 12168 / Alc 37) (Ochrobactrum anthropi), this protein is Ketol-acid reductoisomerase (NADP(+)).